The following is a 63-amino-acid chain: MKANELKEKSVEELNAELLRLLREQFDLRMKLNTDQLAQAHLVKQVRRDIARVKTVLNQKAGA.

Belongs to the universal ribosomal protein uL29 family.

The sequence is that of Large ribosomal subunit protein uL29 from Psychromonas ingrahamii (strain DSM 17664 / CCUG 51855 / 37).